The sequence spans 180 residues: Nucleoside-triphosphatase THEP1 (180 aa).

Residues 9-16 (GPAGVGKT) and 104-111 (LIVIDEIG) each bind ATP.

Belongs to the THEP1 NTPase family.

The enzyme catalyses a ribonucleoside 5'-triphosphate + H2O = a ribonucleoside 5'-diphosphate + phosphate + H(+). In terms of biological role, has nucleotide phosphatase activity towards ATP, GTP, CTP, TTP and UTP. May hydrolyze nucleoside diphosphates with lower efficiency. This Thermococcus kodakarensis (strain ATCC BAA-918 / JCM 12380 / KOD1) (Pyrococcus kodakaraensis (strain KOD1)) protein is Nucleoside-triphosphatase THEP1.